A 155-amino-acid chain; its full sequence is Transcription antitermination protein NusB (155 aa).

It belongs to the NusB family.

Functionally, involved in transcription antitermination. Required for transcription of ribosomal RNA (rRNA) genes. Binds specifically to the boxA antiterminator sequence of the ribosomal RNA (rrn) operons. The protein is Transcription antitermination protein NusB of Vibrio parahaemolyticus serotype O3:K6 (strain RIMD 2210633).